The following is a 205-amino-acid chain: Sarcosine oxidase subunit gamma (205 aa).

Belongs to the SoxG family. Heterotetramer composed of subunits alpha (SoxA), beta (SoxB), gamma (SoxG) and delta (SoxD).

The protein resides in the cytoplasm. It catalyses the reaction sarcosine + (6S)-5,6,7,8-tetrahydrofolate + O2 = (6R)-5,10-methylene-5,6,7,8-tetrahydrofolate + glycine + H2O2. It carries out the reaction sarcosine + O2 + H2O = formaldehyde + glycine + H2O2. With respect to regulation, inhibited by Zn(2+), Cu(2+), Cd(2+), Hg(2+), Ag(+), p-chloromercuribenzoate (p-CMB), iodoacetamide, N-ethylmaleimide, CN(-), o-phenanthroline and sodium lauryl sulfate. In the presence of tetrahydrofolate, catalyzes the oxidative demethylation of sarcosine to yield glycine, 5,10-methylenetetrahydrofolate and hydrogen peroxide. In the absence of tetrahydrofolate, catalyzes the oxidative demethylation of sarcosine to yield glycine, formaldehyde and hydrogen peroxide. Can also use N-methyl-L-alanine and N-ethyl-L-glycine. Is very specific for oxygen as an acceptor. This is Sarcosine oxidase subunit gamma from Corynebacterium sp. (strain U-96).